Consider the following 141-residue polypeptide: Large-conductance mechanosensitive channel (141 aa).

Transmembrane regions (helical) follow at residues 16–36 (VVDLAVGVIIGGAFGKIVSSM) and 83–103 (GNFIQTVIDFTILAFVIFLMV).

Belongs to the MscL family. As to quaternary structure, homopentamer.

It localises to the cell inner membrane. Channel that opens in response to stretch forces in the membrane lipid bilayer. May participate in the regulation of osmotic pressure changes within the cell. The sequence is that of Large-conductance mechanosensitive channel from Cytophaga hutchinsonii (strain ATCC 33406 / DSM 1761 / CIP 103989 / NBRC 15051 / NCIMB 9469 / D465).